Consider the following 325-residue polypeptide: MATH domain and coiled-coil domain-containing protein At3g58430 (325 aa).

The MATH domain maps to 6–131 (HKKFCWIIKN…KGDFKIIAEV (126 aa)). A coiled-coil region spans residues 258 to 306 (FKVDWLEKKLDQVKDKKEREQSGLARLHELEEYLLKLKQKCSNLDLLVE).

This Arabidopsis thaliana (Mouse-ear cress) protein is MATH domain and coiled-coil domain-containing protein At3g58430.